The following is a 209-amino-acid chain: Thiamine-phosphate synthase (209 aa).

Residues 41–45 (QLREK) and Asn73 contribute to the 4-amino-2-methyl-5-(diphosphooxymethyl)pyrimidine site. The Mg(2+) site is built by Asp74 and Asp93. Ser112 serves as a coordination point for 4-amino-2-methyl-5-(diphosphooxymethyl)pyrimidine. 138–140 (TGT) contacts 2-[(2R,5Z)-2-carboxy-4-methylthiazol-5(2H)-ylidene]ethyl phosphate. Lys141 provides a ligand contact to 4-amino-2-methyl-5-(diphosphooxymethyl)pyrimidine. 2-[(2R,5Z)-2-carboxy-4-methylthiazol-5(2H)-ylidene]ethyl phosphate contacts are provided by residues Gly168 and 188–189 (VS).

It belongs to the thiamine-phosphate synthase family. Requires Mg(2+) as cofactor.

It catalyses the reaction 2-[(2R,5Z)-2-carboxy-4-methylthiazol-5(2H)-ylidene]ethyl phosphate + 4-amino-2-methyl-5-(diphosphooxymethyl)pyrimidine + 2 H(+) = thiamine phosphate + CO2 + diphosphate. It carries out the reaction 2-(2-carboxy-4-methylthiazol-5-yl)ethyl phosphate + 4-amino-2-methyl-5-(diphosphooxymethyl)pyrimidine + 2 H(+) = thiamine phosphate + CO2 + diphosphate. The catalysed reaction is 4-methyl-5-(2-phosphooxyethyl)-thiazole + 4-amino-2-methyl-5-(diphosphooxymethyl)pyrimidine + H(+) = thiamine phosphate + diphosphate. It functions in the pathway cofactor biosynthesis; thiamine diphosphate biosynthesis; thiamine phosphate from 4-amino-2-methyl-5-diphosphomethylpyrimidine and 4-methyl-5-(2-phosphoethyl)-thiazole: step 1/1. Condenses 4-methyl-5-(beta-hydroxyethyl)thiazole monophosphate (THZ-P) and 2-methyl-4-amino-5-hydroxymethyl pyrimidine pyrophosphate (HMP-PP) to form thiamine monophosphate (TMP). This is Thiamine-phosphate synthase from Alkaliphilus oremlandii (strain OhILAs) (Clostridium oremlandii (strain OhILAs)).